The sequence spans 140 residues: FAD synthase (140 aa).

Residues 9–10, 14–17, and Asp-92 each bind ATP; these read TF and HPGH.

It belongs to the archaeal FAD synthase family. As to quaternary structure, homodimer. A divalent metal cation serves as cofactor.

The enzyme catalyses FMN + ATP + H(+) = FAD + diphosphate. The protein operates within cofactor biosynthesis; FAD biosynthesis; FAD from FMN: step 1/1. In terms of biological role, catalyzes the transfer of the AMP portion of ATP to flavin mononucleotide (FMN) to produce flavin adenine dinucleotide (FAD) coenzyme. The polypeptide is FAD synthase (Natronomonas pharaonis (strain ATCC 35678 / DSM 2160 / CIP 103997 / JCM 8858 / NBRC 14720 / NCIMB 2260 / Gabara) (Halobacterium pharaonis)).